Consider the following 23-residue polypeptide: Malate dehydrogenase (23 aa).

Residue asparagine 7 coordinates NAD(+). Arginine 23 contacts substrate.

Belongs to the LDH/MDH superfamily. MDH type 1 family. Homodimer.

The enzyme catalyses (S)-malate + NAD(+) = oxaloacetate + NADH + H(+). The polypeptide is Malate dehydrogenase (Pseudotsuga menziesii (Douglas-fir)).